We begin with the raw amino-acid sequence, 380 residues long: MIISSTTDFREAARRQLPRFLFDYIDGGAYAERTLARNVSDLADISLRQRVLKDVSRVSTRTTLFGVEQTLPVALAPVGLTGMYARRGEVQAARAAAAKGVPFCLSTVSVCDLAEVSRASSAPIWFQLYMLRDRGFMRDLLARAADAGATALVFTVDMPVPGARYRDAHSGMTGPNAAMRRLVQAVFKPGWAWDVGVMGRPHTLGNVAPVLGENTGLEDFMGWLGANFDPSIQWKDLDWIRDQWKGPLILKGVLDPEDAKAAADIGADGIVVSNHGGRQLDGVLSSARALPDIAEAVGDRLTVLADGGVRSGLDVVRMLALGAKGVLLGRAFVYALAARGGPGVSQLLDLIEKEMRVAMALTGVNTLDQIDRSILAKTDR.

One can recognise an FMN hydroxy acid dehydrogenase domain in the interval Met-1–Arg-380. Tyr-24 is a binding site for substrate. Ser-106 and Gln-127 together coordinate FMN. Residue Tyr-129 participates in substrate binding. Thr-155 contacts FMN. Arg-164 contributes to the substrate binding site. Lys-251 contacts FMN. Catalysis depends on His-275, which acts as the Proton acceptor. A substrate-binding site is contributed by Arg-278. Residue Asp-306–Arg-330 participates in FMN binding.

This sequence belongs to the FMN-dependent alpha-hydroxy acid dehydrogenase family. It depends on FMN as a cofactor.

It localises to the cell inner membrane. The catalysed reaction is (S)-lactate + A = pyruvate + AH2. Its function is as follows. Catalyzes the conversion of L-lactate to pyruvate. Is coupled to the respiratory chain. The polypeptide is L-lactate dehydrogenase (Caulobacter sp. (strain K31)).